The primary structure comprises 695 residues: DNA ligase (695 aa).

Residues 36 to 40, 85 to 86, and Glu-123 contribute to the NAD(+) site; these read DADYD and SL. The active-site N6-AMP-lysine intermediate is the Lys-125. Residues Arg-146, Glu-182, Lys-318, and Lys-342 each coordinate NAD(+). Zn(2+) is bound by residues Cys-436, Cys-439, Cys-454, and Cys-460. Residues 617–695 form the BRCT domain; that stretch reads LQSGDLAGKT…EDGLKALLSQ (79 aa).

It belongs to the NAD-dependent DNA ligase family. LigA subfamily. Mg(2+) serves as cofactor. Mn(2+) is required as a cofactor.

It carries out the reaction NAD(+) + (deoxyribonucleotide)n-3'-hydroxyl + 5'-phospho-(deoxyribonucleotide)m = (deoxyribonucleotide)n+m + AMP + beta-nicotinamide D-nucleotide.. Its function is as follows. DNA ligase that catalyzes the formation of phosphodiester linkages between 5'-phosphoryl and 3'-hydroxyl groups in double-stranded DNA using NAD as a coenzyme and as the energy source for the reaction. It is essential for DNA replication and repair of damaged DNA. The sequence is that of DNA ligase from Bordetella avium (strain 197N).